Consider the following 319-residue polypeptide: Replication factor C small subunit (319 aa).

45–52 serves as a coordination point for ATP; sequence GPPGTGKT.

This sequence belongs to the activator 1 small subunits family. RfcS subfamily. As to quaternary structure, heteropentamer composed of four small subunits (RfcS) and one large subunit (RfcL). Both subunits interact with PCNA.

Its function is as follows. Part of the RFC clamp loader complex which loads the PCNA sliding clamp onto DNA. The complex possesses DNA-dependent ATPase activity which is further stimulated by PCNA. This is Replication factor C small subunit (rfcS) from Archaeoglobus fulgidus (strain ATCC 49558 / DSM 4304 / JCM 9628 / NBRC 100126 / VC-16).